A 238-amino-acid chain; its full sequence is tRNA (guanine-N(7)-)-methyltransferase (238 aa).

Residues 1–12 show a composition bias toward polar residues; that stretch reads MTDTAENQTPND. The interval 1–20 is disordered; sequence MTDTAENQTPNDRQAGHPRS. S-adenosyl-L-methionine is bound by residues glutamate 70, aspartate 95, aspartate 122, and aspartate 145. The active site involves aspartate 145. Substrate-binding positions include lysine 149, aspartate 181, and 216 to 219; that span reads TKFE.

It belongs to the class I-like SAM-binding methyltransferase superfamily. TrmB family.

The enzyme catalyses guanosine(46) in tRNA + S-adenosyl-L-methionine = N(7)-methylguanosine(46) in tRNA + S-adenosyl-L-homocysteine. Its pathway is tRNA modification; N(7)-methylguanine-tRNA biosynthesis. Catalyzes the formation of N(7)-methylguanine at position 46 (m7G46) in tRNA. In Neisseria gonorrhoeae (strain NCCP11945), this protein is tRNA (guanine-N(7)-)-methyltransferase.